The sequence spans 361 residues: Histidinol-phosphate aminotransferase (361 aa).

K216 bears the N6-(pyridoxal phosphate)lysine mark.

This sequence belongs to the class-II pyridoxal-phosphate-dependent aminotransferase family. Histidinol-phosphate aminotransferase subfamily. Homodimer. The cofactor is pyridoxal 5'-phosphate.

It catalyses the reaction L-histidinol phosphate + 2-oxoglutarate = 3-(imidazol-4-yl)-2-oxopropyl phosphate + L-glutamate. The protein operates within amino-acid biosynthesis; L-histidine biosynthesis; L-histidine from 5-phospho-alpha-D-ribose 1-diphosphate: step 7/9. The polypeptide is Histidinol-phosphate aminotransferase (Francisella philomiragia subsp. philomiragia (strain ATCC 25017 / CCUG 19701 / FSC 153 / O#319-036)).